The sequence spans 760 residues: Protein P1 (760 aa).

Positions 1–33 (MASFLKPVNSQGLWLSLLLAITYLFLLPSAGQS) are cleaved as a signal peptide. The next 4 membrane-spanning stretches (helical) occupy residues 172–192 (LIEFVLVSWSLWLCSVLVYVA), 194–214 (AVPGKFLLYMAAFCTTFWAWP), 218–235 (ASSLIRIVTTPLTLIGFL), and 240–260 (IGLISHCLALTWNMFMTWSLL). The region spanning 318–515 (IPGVQIKKLR…SSSPKFTGCE (198 aa)) is the Peptidase S39 domain. Residues H366, D396, and S465 each act as for protease activity in the active site. Disordered stretches follow at residues 572-672 (GLWA…LSQV) and 684-760 (LTVQ…PRRN). Over residues 621-643 (RAEKVRHVRRSEMTPEQKRADNL) the composition is skewed to basic and acidic residues.

The protein belongs to the peptidase S39B family. Specific enzymatic cleavages in vivo yield mature proteins. The protease probably cleaves itself and releases the VPg protein.

It is found in the membrane. In terms of biological role, precursor from which the VPg molecule is probably released at the onset of the RNA synthesis. Essential for virus replication. The polypeptide is Protein P1 (Pea enation mosaic virus-1 (strain WSG) (PEMV-1)).